The primary structure comprises 540 residues: CWF19-like protein 1 (540 aa).

Residues glutamate 265–proline 326 form a disordered region. Over residues proline 267–lysine 277 the composition is skewed to basic and acidic residues.

Belongs to the CWF19 family.

This is CWF19-like protein 1 (cwf19l1) from Xenopus laevis (African clawed frog).